Reading from the N-terminus, the 151-residue chain is UPF0178 protein CJA_1978 (151 aa).

This sequence belongs to the UPF0178 family.

This Cellvibrio japonicus (strain Ueda107) (Pseudomonas fluorescens subsp. cellulosa) protein is UPF0178 protein CJA_1978.